A 223-amino-acid polypeptide reads, in one-letter code: Endonuclease NucS (223 aa).

Belongs to the NucS endonuclease family.

The protein localises to the cytoplasm. Its function is as follows. Cleaves both 3' and 5' ssDNA extremities of branched DNA structures. This chain is Endonuclease NucS, found in Streptomyces griseus subsp. griseus (strain JCM 4626 / CBS 651.72 / NBRC 13350 / KCC S-0626 / ISP 5235).